A 259-amino-acid polypeptide reads, in one-letter code: 4-hydroxy-tetrahydrodipicolinate reductase (259 aa).

Residues 8 to 13 (GFAGAM), 94 to 96 (GTT), and 120 to 123 (APNF) each bind NAD(+). Histidine 150 (proton donor/acceptor) is an active-site residue. Histidine 151 contributes to the (S)-2,3,4,5-tetrahydrodipicolinate binding site. Residue lysine 154 is the Proton donor of the active site. Position 160–161 (160–161 (GT)) interacts with (S)-2,3,4,5-tetrahydrodipicolinate.

Belongs to the DapB family.

Its subcellular location is the cytoplasm. It catalyses the reaction (S)-2,3,4,5-tetrahydrodipicolinate + NAD(+) + H2O = (2S,4S)-4-hydroxy-2,3,4,5-tetrahydrodipicolinate + NADH + H(+). The catalysed reaction is (S)-2,3,4,5-tetrahydrodipicolinate + NADP(+) + H2O = (2S,4S)-4-hydroxy-2,3,4,5-tetrahydrodipicolinate + NADPH + H(+). The protein operates within amino-acid biosynthesis; L-lysine biosynthesis via DAP pathway; (S)-tetrahydrodipicolinate from L-aspartate: step 4/4. Functionally, catalyzes the conversion of 4-hydroxy-tetrahydrodipicolinate (HTPA) to tetrahydrodipicolinate. The protein is 4-hydroxy-tetrahydrodipicolinate reductase of Limosilactobacillus fermentum (strain NBRC 3956 / LMG 18251) (Lactobacillus fermentum).